Reading from the N-terminus, the 412-residue chain is MSKSARNRTRRNPDGQQGSARSFDFAEYLRTETVGGMVLLAAAALALVLANSPAEELYRTVRDFTVGPHFLHLDLTIGEWAKDGLLAIFFFVAGLELKRELVVGELADRKTATLPVVAALGGMVVPAVLAFAIGHGAPGAHAAWAIPVATDIAFALGVLSLTGSWMPTAARVFLLSLAVVDDLGAIVVIAVLFTSGLSVLALLAAAALCAVYWYAQKRRITTPFLYVPLAVATWIAVHSSGIHATIAGVALGLLTRVRRDLHETASPAMRLEHRLQPWSAGLIVPVFALFAAGVPVDGEALVAMTHDRVAIAVVVGLVVGKLVGIFGSSYLAVKIGIGAKPRGLRWRDLSALAMLGGVGFTVSLLIAELSLEGAAAERAKAAVLIASALASLLAAVMLLRRGRKVRNGDASA.

Helical transmembrane passes span 34–54 (VGGM…NSPA), 75–95 (LTIG…VAGL), 114–134 (LPVV…FAIG), 142–162 (AAWA…LSLT), 183–203 (LGAI…LALL), 234–254 (WIAV…LGLL), 282–302 (LIVP…EALV), 309–329 (VAIA…FGSS), 349–369 (LSAL…IAEL), and 379–399 (AKAA…VMLL).

Belongs to the NhaA Na(+)/H(+) (TC 2.A.33) antiporter family.

The protein resides in the cell membrane. It carries out the reaction Na(+)(in) + 2 H(+)(out) = Na(+)(out) + 2 H(+)(in). Na(+)/H(+) antiporter that extrudes sodium in exchange for external protons. This is Na(+)/H(+) antiporter NhaA 1 from Saccharopolyspora erythraea (strain ATCC 11635 / DSM 40517 / JCM 4748 / NBRC 13426 / NCIMB 8594 / NRRL 2338).